The chain runs to 312 residues: Methionyl-tRNA formyltransferase (312 aa).

Residue 112 to 115 coordinates (6S)-5,6,7,8-tetrahydrofolate; it reads SLLP.

Belongs to the Fmt family.

The enzyme catalyses L-methionyl-tRNA(fMet) + (6R)-10-formyltetrahydrofolate = N-formyl-L-methionyl-tRNA(fMet) + (6S)-5,6,7,8-tetrahydrofolate + H(+). Functionally, attaches a formyl group to the free amino group of methionyl-tRNA(fMet). The formyl group appears to play a dual role in the initiator identity of N-formylmethionyl-tRNA by promoting its recognition by IF2 and preventing the misappropriation of this tRNA by the elongation apparatus. The protein is Methionyl-tRNA formyltransferase of Dehalococcoides mccartyi (strain ATCC BAA-2266 / KCTC 15142 / 195) (Dehalococcoides ethenogenes (strain 195)).